Consider the following 3097-residue polypeptide: Neural-cadherin (3097 aa).

Positions 1–36 are cleaved as a signal peptide; sequence MAARRCLNQLRQRYITNRFNICTCAIFLISLPFILA. N-linked (GlcNAc...) asparagine glycans are attached at residues N97 and N150. A Cadherin 1 domain is found at 181 to 305; it reads VRENQPAGTR…LDENDNRPIF (125 aa). N-linked (GlcNAc...) asparagine glycosylation is found at N325 and N426. Cadherin domains follow at residues 430–543, 554–651, 660–756, 766–858, 867–968, 978–1078, 1087–1183, 1193–1299, 1307–1414, 1423–1514, 1523–1630, 1639–1742, 1749–1861, 1870–1966, and 1974–2085; these read HREK…PPYF, VQLN…APQF, IPEN…APKF, VDED…EPKF, VDEN…KPVF, VEEG…PPLF, VKQD…PPVW, VKEN…IPLF, VLEG…PPYF, VDEN…PPVF, ITEE…APIF, VTEN…PPQF, TEVD…KPHF, VFED…APKF, and LPEH…QPGS. N-linked (GlcNAc...) asparagine glycosylation is present at N930. An N-linked (GlcNAc...) asparagine glycan is attached at N1266. 11 disulfide bridges follow: C2346-C2357, C2351-C2366, C2368-C2377, C2559-C2585, C2592-C2607, C2601-C2616, C2618-C2627, C2787-C2822, C2869-C2880, C2874-C2891, and C2893-C2902. One can recognise an EGF-like 1 domain in the interval 2346–2377; it reads CRTTPCHNGGRCVDTRFGPHCSCPVGYTGPRC. The Laminin G-like 1 domain occupies 2379–2585; that stretch reads QTTRSFRGNG…GLSRNSVAGC (207 aa). Residues 2592–2627 form the EGF-like 2 domain; that stretch reads CAQTETTARCWEHGNCVGSLSEARCHCRPGWTGPAC. The Laminin G-like 2 domain occupies 2631 to 2822; the sequence is TIPTTFKAQS…TMARNLEKGC (192 aa). In terms of domain architecture, EGF-like 3 spans 2869-2902; it reads CLDMPCMNGATCINLEPRLRYRCICPDGFWGENC. Residues 2917–2937 traverse the membrane as a helical segment; sequence ALAAILVCLLIILILVLVFVV. Residues 2938 to 3097 lie on the Cytoplasmic side of the membrane; the sequence is YNRRREAHIK…PNPHNTELEL (160 aa).

In terms of tissue distribution, in the embryo, the protein first appears in the mesoderm at stage 9 and is present in the myoblasts and muscle fibers by stage 12 and stage 14, respectively. At stage 12 the protein is also located in the axons of the entire CNS, but not in the glial cells. In third instar larvae protein is expressed in the CNS neuropile, photoreceptor axons and precursors of adult muscles.

The protein resides in the cell membrane. Its function is as follows. Cadherins are calcium-dependent cell adhesion proteins. They preferentially interact with themselves in a homophilic manner in connecting cells; cadherins may thus contribute to the sorting of heterogeneous cell types. May associate with arm neural isoform and participate in the transmission of developmental information. This is Neural-cadherin (CadN) from Drosophila melanogaster (Fruit fly).